A 168-amino-acid chain; its full sequence is Secretory-abundant heat soluble protein 33020 (168 aa).

The first 19 residues, methionine 1–alanine 19, serve as a signal peptide directing secretion. Positions glutamate 26–proline 57 are SAHS-c1. Residues tyrosine 72–glutamate 100 are SAHS-c2. Residues lysine 113–lysine 162 form an SAHS-c3 region.

The protein belongs to the Secretory-abundant heat soluble protein (SAHS) family.

It is found in the secreted. Secreted heat soluble protein acting as a molecular shield in water-deficient condition. Tardigrade-specific intrinsically disordered proteins (TDPs) are essential for desiccation tolerance by forming non-crystalline amorphous solids upon desiccation, and this vitrified state mirrors their protective capabilities. This Hypsibius exemplaris (Freshwater tardigrade) protein is Secretory-abundant heat soluble protein 33020.